The sequence spans 532 residues: Cytochrome c oxidase subunit 1 (532 aa).

Transmembrane regions (helical) follow at residues 1–21, 27–47, and 69–89; these read MWDY…AYAA, LPYM…LIWV, and GVIA…VIAF. H114 is a heme b binding site. The next 8 membrane-spanning stretches (helical) occupy residues 115–135, 143–163, 185–205, 212–232, 263–283, 296–316, 328–348, and 366–386; these read TSAV…FYVV, LFGG…IIVT, LDIL…GTIF, IYVA…LHIV, GHNA…YYFV, LSIV…PHHL, LGMV…INGL, and MMVV…MMSI. Residues H264, H314, and H315 each contribute to the Cu cation site. H402 and H404 together coordinate heme b. A run of 3 helical transmembrane segments spans residues 403–423, 442–462, and 496–516; these read VHSG…YFLT, FWLA…TGIM, and VGGV…WATV.

Belongs to the heme-copper respiratory oxidase family. Requires Cu(2+) as cofactor. It depends on heme b as a cofactor.

The protein localises to the cell membrane. It carries out the reaction 4 Fe(II)-[cytochrome c] + O2 + 8 H(+)(in) = 4 Fe(III)-[cytochrome c] + 2 H2O + 4 H(+)(out). The protein operates within energy metabolism; oxidative phosphorylation. Its function is as follows. Cytochrome c oxidase is the component of the respiratory chain that catalyzes the reduction of oxygen to water. Subunits 1-3 form the functional core of the enzyme complex. Co I is the catalytic subunit of the enzyme. Electrons originating in cytochrome c are transferred via the copper A center of subunit 2 and heme a of subunit 1 to the bimetallic center formed by heme a3 and copper B. This cytochrome c oxidase shows proton pump activity across the membrane in addition to the electron transfer. In Rhodobacter capsulatus (Rhodopseudomonas capsulata), this protein is Cytochrome c oxidase subunit 1 (ctaD).